Reading from the N-terminus, the 261-residue chain is Probable 6-phosphogluconolactonase 4 (261 aa).

This sequence belongs to the glucosamine/galactosamine-6-phosphate isomerase family. 6-phosphogluconolactonase subfamily.

It is found in the cytoplasm. Its subcellular location is the cytosol. It catalyses the reaction 6-phospho-D-glucono-1,5-lactone + H2O = 6-phospho-D-gluconate + H(+). It functions in the pathway carbohydrate degradation; pentose phosphate pathway; D-ribulose 5-phosphate from D-glucose 6-phosphate (oxidative stage): step 2/3. Its function is as follows. Catalyzes the hydrolysis of 6-phosphogluconolactone to 6-phosphogluconate. In Arabidopsis thaliana (Mouse-ear cress), this protein is Probable 6-phosphogluconolactonase 4.